The chain runs to 219 residues: Probable lipoprotein YiaD (219 aa).

Positions 1–20 (MKKRVYLIAAVVSGALAVSG) are cleaved as a signal peptide. Cysteine 21 carries the N-palmitoyl cysteine lipid modification. Cysteine 21 is lipidated: S-diacylglycerol cysteine. The next 2 membrane-spanning stretches (helical) occupy residues 37–55 (IGAG…LSSS) and 62–84 (GALI…MDVQ). The 117-residue stretch at 103-219 (GDNIILNMPN…RRVEITLSPL (117 aa)) folds into the OmpA-like domain.

It localises to the cell inner membrane. It is found in the cell outer membrane. Suppresses temperature-sensitive mutations in BamB when overexpressed. The polypeptide is Probable lipoprotein YiaD (yiaD) (Escherichia coli (strain K12)).